The primary structure comprises 142 residues: Large ribosomal subunit protein uL13 (142 aa).

Belongs to the universal ribosomal protein uL13 family. In terms of assembly, part of the 50S ribosomal subunit.

This protein is one of the early assembly proteins of the 50S ribosomal subunit, although it is not seen to bind rRNA by itself. It is important during the early stages of 50S assembly. The polypeptide is Large ribosomal subunit protein uL13 (Delftia acidovorans (strain DSM 14801 / SPH-1)).